Reading from the N-terminus, the 229-residue chain is Uridylate cyclase (229 aa).

The Guanylate cyclase domain maps to 47–178 (TVLYADLDGS…RAANYAAKLT (132 aa)). Tyrosine 50 provides a ligand contact to a ribonucleoside 5'-triphosphate. Mn(2+) contacts are provided by aspartate 52 and aspartate 96. Arginine 97 serves as a coordination point for a ribonucleoside 5'-triphosphate.

It belongs to the adenylyl cyclase class-4/guanylyl cyclase family. Pyrimidine cyclase subfamily. In terms of assembly, homodimer. Mn(2+) is required as a cofactor.

The protein localises to the cytoplasm. The catalysed reaction is UTP = 3',5'-cyclic UMP + diphosphate. Functionally, pycsar (pyrimidine cyclase system for antiphage resistance) provides immunity against bacteriophage. The pyrimidine cyclase (PycC) synthesizes cyclic nucleotides in response to infection; these serve as specific second messenger signals. The signals activate the adjacent effector, leading to bacterial cell death and abortive phage infection. A clade B Pycsar system. Its function is as follows. The pyrimidine cyclase gene of a two-gene Pycsar system, generates cyclic UMP (cUMP) from UTP, has little to no activity on ATP, CTP or GTP. Expression of this and adjacent effector BcPycTIR (AC A0A0J5WTU0) probably confers resistance to bacteriophage. The genes are probably only expressed in response to bacteriophage infection. The protein is Uridylate cyclase of Burkholderia cepacia (Pseudomonas cepacia).